A 369-amino-acid polypeptide reads, in one-letter code: MSETSLLPRAHGAAVLSAAMRSTPDDFQLDELPAFEPSGEGEHLLLTVRKRGQNTAYIAKQLAHWAGIAEMGVSYAGLKDRHAVTTQRFSVHLPKRIAPDIAALDDAQMQVVQSAWHNRKLQRGALHGNRFVLTLRQVQGEREAIEQRLQAIAARGIPNWFGEQRFGRDGANVAAALAMFGHVQAEDGTLLPAPTSRRRLRNDQRSMLLSAARSVLFNRVLGARVAQGSWDSALQGEAWMLDGSRSVFGPEPWSEALAERLARFDIHPSGPLWGVGDLRSADQAAALEQGALSDPQSEALRQGLEAAGLKQERRALRLRPQGLDYRWLEAQTLQLEFALPPGCYATAVLWELGDVTDAGRFNVGMRADA.

The active-site Nucleophile is aspartate 80. The 163-residue stretch at 156–318 (GIPNWFGEQR…LKQERRALRL (163 aa)) folds into the TRUD domain.

The protein belongs to the pseudouridine synthase TruD family.

It catalyses the reaction uridine(13) in tRNA = pseudouridine(13) in tRNA. Responsible for synthesis of pseudouridine from uracil-13 in transfer RNAs. The protein is tRNA pseudouridine synthase D of Xanthomonas euvesicatoria pv. vesicatoria (strain 85-10) (Xanthomonas campestris pv. vesicatoria).